A 450-amino-acid chain; its full sequence is Adenosylhomocysteinase (450 aa).

3 residues coordinate substrate: T59, D135, and E160. 161-163 lines the NAD(+) pocket; it reads TTT. Substrate-binding residues include K190 and D194. Residues N195, 224-229, E247, 303-305, and N350 each bind NAD(+); these read GFGDVG and IGH.

This sequence belongs to the adenosylhomocysteinase family. NAD(+) serves as cofactor.

Its subcellular location is the cytoplasm. It catalyses the reaction S-adenosyl-L-homocysteine + H2O = L-homocysteine + adenosine. Its pathway is amino-acid biosynthesis; L-homocysteine biosynthesis; L-homocysteine from S-adenosyl-L-homocysteine: step 1/1. In terms of biological role, adenosylhomocysteine is a competitive inhibitor of S-adenosyl-L-methionine-dependent methyl transferase reactions; therefore adenosylhomocysteinase may play a key role in the control of methylations via regulation of the intracellular concentration of adenosylhomocysteine. The sequence is that of Adenosylhomocysteinase (SAH1) from Candida albicans (strain SC5314 / ATCC MYA-2876) (Yeast).